A 369-amino-acid polypeptide reads, in one-letter code: Maltose/maltodextrin import ATP-binding protein MalK (369 aa).

Residues 4 to 234 enclose the ABC transporter domain; it reads VQLRNVTKAW…PADRFVAGFI (231 aa). 36 to 43 is a binding site for ATP; the sequence is GPSGCGKS.

The protein belongs to the ABC transporter superfamily. Maltooligosaccharide importer (TC 3.A.1.1.1) family. The complex is composed of two ATP-binding proteins (MalK), two transmembrane proteins (MalG and MalK) and a solute-binding protein (MalE).

It is found in the cell inner membrane. The enzyme catalyses D-maltose(out) + ATP + H2O = D-maltose(in) + ADP + phosphate + H(+). In terms of biological role, part of the ABC transporter complex MalEFGK involved in maltose/maltodextrin import. Responsible for energy coupling to the transport system. The chain is Maltose/maltodextrin import ATP-binding protein MalK from Salmonella choleraesuis (strain SC-B67).